The chain runs to 358 residues: Na(+)/H(+) exchange regulatory cofactor NHE-RF1 (358 aa).

Ser-2 carries the post-translational modification N-acetylserine. Residues Ser-2 and Ser-46 each carry the phosphoserine modification. The PDZ 1 domain maps to 14-94 (LCCLEKGPNG…AVRLLVVDPD (81 aa)). The segment covering 114 to 134 (QAGPEQAGPPAAPGEQGPAGE) has biased composition (low complexity). The segment at 114–151 (QAGPEQAGPPAAPGEQGPAGENEPREVEKSHPERRELR) is disordered. Basic and acidic residues predominate over residues 135–151 (NEPREVEKSHPERRELR). The 81-residue stretch at 154 to 234 (LCAMKKGPNG…EAKLLVVDKE (81 aa)) folds into the PDZ 2 domain. Residues 247 to 358 (SSEHLNGPLP…SEKKELFSNL (112 aa)) are disordered. Low complexity predominate over residues 272–290 (LAPAASESPRPALARSASS). Phosphoserine occurs at positions 279, 289, and 290. Residue Thr-292 is modified to Phosphothreonine. A phosphoserine mark is found at Ser-293, Ser-298, and Ser-301. A compositionally biased stretch (low complexity) spans 308-327 (TAPSSTSSSSDPILDFSISL). Residues 348–358 (WSEKKELFSNL) show a composition bias toward basic and acidic residues.

As to quaternary structure, homodimer, and heterodimer with NHERF2. Binds the N-termini of EZR, RDX and MSN. Binds the C-termini of PDGFRA, PDGFRB, ADRB2, NOS2 and CFTR. Binds ARHGAP17, EPI64, RACK1, OPRK1, GNAQ, CTNNB1 and PLCB3. Binds PDZK1. Interacts with CLCN3. Binds the C-terminus of PAG1. In resting T-cells, part of a PAG1-NHERF1-MSN complex which is disrupted upon TCR activation. Forms a complex with CFTR and SLC4A7. Forms a complex with SLC4A7 and ATP6V1B1. Interacts with TRPC4 (via the PDZ-binding domain). Directly interacts with HTR4. Interacts (via the PDZ 1 domain) with PODXL (via the C-terminal PDZ-binding motif DTHL); interaction is not detected in glomerular epithelium cells. Interacts (via the PDZ 1 domain) with PODXL (via the C-terminal PDZ-binding motif DTHL); the interaction take place early in the secretory pathway and is necessary for its apical membrane sorting. Interacts with SLC26A3. Interacts with MCC. Interacts with SLC34A1. Interacts (via the PDZ domains) with SLC26A6 isoform 4 and isoform 5. Interacts (via PDZ domains) with ACE2 (via PDZ-binding motif); the interaction may enhance ACE2 membrane residence. Post-translationally, phosphorylated on serine residues. As to expression, detected in ileum, duodenum and in kidney, where it is found in the glomerulus, the proximal tubule, the thick ascending limb of Henle's loop and the cortical collecting duct.

It localises to the cytoplasm. The protein resides in the apical cell membrane. Its subcellular location is the cell projection. The protein localises to the filopodium. It is found in the ruffle. It localises to the microvillus. The protein resides in the endomembrane system. Functionally, scaffold protein that connects plasma membrane proteins with members of the ezrin/moesin/radixin family and thereby helps to link them to the actin cytoskeleton and to regulate their surface expression. Necessary for recycling of internalized ADRB2. Was first known to play a role in the regulation of the activity and subcellular location of SLC9A3. Necessary for cAMP-mediated phosphorylation and inhibition of SLC9A3. Involved in sperm capacitation. May participate in the regulation of the chloride and bicarbonate homeostasis in spermatozoa. May enhance Wnt signaling. May participate in HTR4 targeting to microvilli. Involved in the regulation of phosphate reabsorption in the renal proximal tubules. This chain is Na(+)/H(+) exchange regulatory cofactor NHE-RF1 (NHERF1), found in Oryctolagus cuniculus (Rabbit).